A 507-amino-acid chain; its full sequence is Ribosomal protein uS12 methylthiotransferase RimO (507 aa).

The MTTase N-terminal domain occupies 13-124 (RRVALLTLGC…ISDRLGAVLA (112 aa)). [4Fe-4S] cluster contacts are provided by Cys-22, Cys-58, Cys-87, Cys-205, Cys-209, and Cys-212. Residues 191 to 422 (LDTGPVASLK…ALADELCAQR (232 aa)) form the Radical SAM core domain. The region spanning 424-497 (EQRLGSTVQV…GVDLVAVPDA (74 aa)) is the TRAM domain.

It belongs to the methylthiotransferase family. RimO subfamily. [4Fe-4S] cluster serves as cofactor.

The protein resides in the cytoplasm. The enzyme catalyses L-aspartate(89)-[ribosomal protein uS12]-hydrogen + (sulfur carrier)-SH + AH2 + 2 S-adenosyl-L-methionine = 3-methylsulfanyl-L-aspartate(89)-[ribosomal protein uS12]-hydrogen + (sulfur carrier)-H + 5'-deoxyadenosine + L-methionine + A + S-adenosyl-L-homocysteine + 2 H(+). Functionally, catalyzes the methylthiolation of an aspartic acid residue of ribosomal protein uS12. The protein is Ribosomal protein uS12 methylthiotransferase RimO of Salinispora tropica (strain ATCC BAA-916 / DSM 44818 / JCM 13857 / NBRC 105044 / CNB-440).